The following is a 60-amino-acid chain: Beta-defensin 8 (60 aa).

The first 22 residues, 1-22 (MRIHYLLFTFLLVLLSPLAAFS), serve as a signal peptide directing secretion. The propeptide occupies 23–25 (QKI). Cystine bridges form between Cys31–Cys58, Cys38–Cys52, and Cys42–Cys59.

It belongs to the beta-defensin family. As to expression, most highly expressed in testis and heart.

The protein localises to the secreted. In terms of biological role, a synthetic peptide displays antimicrobial activities against S.aureus, P.aeruginosa, E.coli and B.cepacia. The antimicrobial activity against S.aureus, E.coli and B.cepacia is reduced in raised concentration of NaCl, but its action against P.aeruginosa is independent of NaCl concentration. This Mus musculus (Mouse) protein is Beta-defensin 8 (Defb8).